A 448-amino-acid chain; its full sequence is Adenylosuccinate synthetase (448 aa).

GTP is bound by residues 22 to 28 (GDEGKGK) and 50 to 52 (GHT). Residue D23 is the Proton acceptor of the active site. Positions 23 and 50 each coordinate Mg(2+). Residues 23-26 (DEGK), 48-51 (NAGH), T139, R153, Q234, T249, and R321 contribute to the IMP site. H51 functions as the Proton donor in the catalytic mechanism. A substrate-binding site is contributed by 317 to 323 (SVTGRPR). Residues R323, 349-351 (KLD), and 431-433 (STG) contribute to the GTP site.

It belongs to the adenylosuccinate synthetase family. In terms of assembly, homodimer. Mg(2+) is required as a cofactor.

It localises to the cytoplasm. It carries out the reaction IMP + L-aspartate + GTP = N(6)-(1,2-dicarboxyethyl)-AMP + GDP + phosphate + 2 H(+). The protein operates within purine metabolism; AMP biosynthesis via de novo pathway; AMP from IMP: step 1/2. Plays an important role in the de novo pathway of purine nucleotide biosynthesis. Catalyzes the first committed step in the biosynthesis of AMP from IMP. This Burkholderia pseudomallei (strain 1106a) protein is Adenylosuccinate synthetase.